The primary structure comprises 107 residues: UPF0145 protein ESA_02470 (107 aa).

The protein belongs to the UPF0145 family.

The sequence is that of UPF0145 protein ESA_02470 from Cronobacter sakazakii (strain ATCC BAA-894) (Enterobacter sakazakii).